Consider the following 875-residue polypeptide: Alanine--tRNA ligase (875 aa).

4 residues coordinate Zn(2+): His563, His567, Cys665, and His669.

The protein belongs to the class-II aminoacyl-tRNA synthetase family. Zn(2+) is required as a cofactor.

The protein localises to the cytoplasm. It catalyses the reaction tRNA(Ala) + L-alanine + ATP = L-alanyl-tRNA(Ala) + AMP + diphosphate. In terms of biological role, catalyzes the attachment of alanine to tRNA(Ala) in a two-step reaction: alanine is first activated by ATP to form Ala-AMP and then transferred to the acceptor end of tRNA(Ala). Also edits incorrectly charged Ser-tRNA(Ala) and Gly-tRNA(Ala) via its editing domain. This is Alanine--tRNA ligase from Desulfitobacterium hafniense (strain Y51).